Consider the following 373-residue polypeptide: 3-isopropylmalate dehydrogenase (373 aa).

82-93 (GPKWGTGAVRPE) serves as a coordination point for NAD(+). R100, R110, R139, and D231 together coordinate substrate. Mg(2+) contacts are provided by D231 and D260. 295–306 (GSAPDLPENKVN) contributes to the NAD(+) binding site.

This sequence belongs to the isocitrate and isopropylmalate dehydrogenases family. As to quaternary structure, homodimer. Mg(2+) is required as a cofactor. Mn(2+) serves as cofactor.

The protein localises to the cytoplasm. It catalyses the reaction (2R,3S)-3-isopropylmalate + NAD(+) = 4-methyl-2-oxopentanoate + CO2 + NADH. It functions in the pathway amino-acid biosynthesis; L-leucine biosynthesis; L-leucine from 3-methyl-2-oxobutanoate: step 3/4. Its function is as follows. Catalyzes the oxidation of 3-carboxy-2-hydroxy-4-methylpentanoate (3-isopropylmalate) to 3-carboxy-4-methyl-2-oxopentanoate. The product decarboxylates to 4-methyl-2 oxopentanoate. This is 3-isopropylmalate dehydrogenase (LEU2) from Scheffersomyces stipitis (strain ATCC 58785 / CBS 6054 / NBRC 10063 / NRRL Y-11545) (Yeast).